The primary structure comprises 322 residues: MGIGSYHEPVLAAEVLQLLVRMPGVYVDGTLGGGGHSLAILEELERKGFLADSFLIGIDQDDHALKAASEKLSGFSGSTAIIKGNFSAIAAIVRKISAERHFTDSVAGILLDLGVSSAQIDTPERGFSYMRSGPLDMRMDPEAESSAADLVNTLSERELVTLFFRYGEEPRSRSIARGIIDYREKHGSILRTEELAEIIRLREARPDRVIKTLSRVFQALRVEVNRELEVLEQVLADGASLLSAQGRLAVISYHSLEDRMVKSFFTAQSSSDWGPRGVGLTEPLKKAEFAVVTRKPVASGQQELSLNPRSRSAKLRVLEKLA.

Residues 34–36, aspartate 59, phenylalanine 86, aspartate 112, and glutamine 119 each bind S-adenosyl-L-methionine; that span reads GGH.

This sequence belongs to the methyltransferase superfamily. RsmH family.

Its subcellular location is the cytoplasm. The catalysed reaction is cytidine(1402) in 16S rRNA + S-adenosyl-L-methionine = N(4)-methylcytidine(1402) in 16S rRNA + S-adenosyl-L-homocysteine + H(+). In terms of biological role, specifically methylates the N4 position of cytidine in position 1402 (C1402) of 16S rRNA. The protein is Ribosomal RNA small subunit methyltransferase H of Chlorobium limicola (strain DSM 245 / NBRC 103803 / 6330).